We begin with the raw amino-acid sequence, 273 residues long: N(omega)-hydroxy-L-arginine amidinohydrolase (273 aa).

Mn(2+) contacts are provided by D109, H111, D113, D198, and D200.

This sequence belongs to the arginase family. Mn(2+) serves as cofactor.

The enzyme catalyses N(omega)-hydroxy-L-arginine + H2O = hydroxyurea + L-ornithine. Functionally, involved in the biosynthesis of the antibiotic D-cycloserine (DCS), a cyclic structural analog of D-alanine, used as an antitubercular agent. Catalyzes the hydrolysis of N(omega)-hydroxy-L-arginine (NHA) to yield hydroxyurea (HU) and L-ornithine. This Streptomyces lavendulae protein is N(omega)-hydroxy-L-arginine amidinohydrolase.